Reading from the N-terminus, the 349-residue chain is Isopentenyl-diphosphate delta-isomerase (349 aa).

9-10 serves as a coordination point for substrate; sequence RK. Residues 65 to 67, S95, and N124 contribute to the FMN site; that span reads AMT. 95–97 is a substrate binding site; that stretch reads STH. Residue Q154 participates in substrate binding. E155 serves as a coordination point for Mg(2+). FMN-binding positions include K186, S211, T216, 262-264, and 283-284; these read GLR and SR.

The protein belongs to the IPP isomerase type 2 family. Homooctamer. Dimer of tetramers. The cofactor is FMN. It depends on NADPH as a cofactor. Mg(2+) serves as cofactor.

The protein resides in the cytoplasm. The enzyme catalyses isopentenyl diphosphate = dimethylallyl diphosphate. Functionally, involved in the biosynthesis of isoprenoids. Catalyzes the 1,3-allylic rearrangement of the homoallylic substrate isopentenyl (IPP) to its allylic isomer, dimethylallyl diphosphate (DMAPP). This Staphylococcus epidermidis (strain ATCC 35984 / DSM 28319 / BCRC 17069 / CCUG 31568 / BM 3577 / RP62A) protein is Isopentenyl-diphosphate delta-isomerase.